A 305-amino-acid polypeptide reads, in one-letter code: Acetylglutamate kinase (305 aa).

Substrate-binding positions include 78 to 79 (GG), Arg-100, and Asn-202.

This sequence belongs to the acetylglutamate kinase family. ArgB subfamily.

Its subcellular location is the cytoplasm. It carries out the reaction N-acetyl-L-glutamate + ATP = N-acetyl-L-glutamyl 5-phosphate + ADP. It functions in the pathway amino-acid biosynthesis; L-arginine biosynthesis; N(2)-acetyl-L-ornithine from L-glutamate: step 2/4. Functionally, catalyzes the ATP-dependent phosphorylation of N-acetyl-L-glutamate. The chain is Acetylglutamate kinase from Polaromonas sp. (strain JS666 / ATCC BAA-500).